Consider the following 415-residue polypeptide: Gamma-glutamyl phosphate reductase (415 aa).

Belongs to the gamma-glutamyl phosphate reductase family.

Its subcellular location is the cytoplasm. The catalysed reaction is L-glutamate 5-semialdehyde + phosphate + NADP(+) = L-glutamyl 5-phosphate + NADPH + H(+). It functions in the pathway amino-acid biosynthesis; L-proline biosynthesis; L-glutamate 5-semialdehyde from L-glutamate: step 2/2. Functionally, catalyzes the NADPH-dependent reduction of L-glutamate 5-phosphate into L-glutamate 5-semialdehyde and phosphate. The product spontaneously undergoes cyclization to form 1-pyrroline-5-carboxylate. The polypeptide is Gamma-glutamyl phosphate reductase (Oceanobacillus iheyensis (strain DSM 14371 / CIP 107618 / JCM 11309 / KCTC 3954 / HTE831)).